Here is a 422-residue protein sequence, read N- to C-terminus: UDP-N-acetylglucosamine 1-carboxyvinyltransferase (422 aa).

Residue 22-23 (KN) coordinates phosphoenolpyruvate. Arg-94 lines the UDP-N-acetyl-alpha-D-glucosamine pocket. The active-site Proton donor is the Cys-118. Cys-118 is modified (2-(S-cysteinyl)pyruvic acid O-phosphothioketal). Residues 123 to 127 (RPVDL), 163 to 166 (KVSV), Asp-308, and Ile-330 each bind UDP-N-acetyl-alpha-D-glucosamine.

Belongs to the EPSP synthase family. MurA subfamily.

It localises to the cytoplasm. The enzyme catalyses phosphoenolpyruvate + UDP-N-acetyl-alpha-D-glucosamine = UDP-N-acetyl-3-O-(1-carboxyvinyl)-alpha-D-glucosamine + phosphate. It participates in cell wall biogenesis; peptidoglycan biosynthesis. In terms of biological role, cell wall formation. Adds enolpyruvyl to UDP-N-acetylglucosamine. The polypeptide is UDP-N-acetylglucosamine 1-carboxyvinyltransferase (Yersinia enterocolitica serotype O:8 / biotype 1B (strain NCTC 13174 / 8081)).